The sequence spans 350 residues: Selenide, water dikinase (350 aa).

Selenocysteine 15 is a catalytic residue. A non-standard amino acid (selenocysteine) is located at residue selenocysteine 15. Residues lysine 18 and 47–49 (HNE) each bind ATP. Residue aspartate 50 coordinates Mg(2+). ATP is bound by residues aspartate 67, aspartate 90, and 138–140 (GHS). Residue aspartate 90 coordinates Mg(2+). Aspartate 227 contacts Mg(2+).

The protein belongs to the selenophosphate synthase 1 family. Class I subfamily. In terms of assembly, homodimer. Mg(2+) serves as cofactor.

It carries out the reaction hydrogenselenide + ATP + H2O = selenophosphate + AMP + phosphate + 2 H(+). In terms of biological role, synthesizes selenophosphate from selenide and ATP. The polypeptide is Selenide, water dikinase (Nitratidesulfovibrio vulgaris (strain DSM 19637 / Miyazaki F) (Desulfovibrio vulgaris)).